The sequence spans 867 residues: DNA mismatch repair protein MutS (867 aa).

606–613 (GPNMSGKS) lines the ATP pocket.

This sequence belongs to the DNA mismatch repair MutS family.

Its function is as follows. This protein is involved in the repair of mismatches in DNA. It is possible that it carries out the mismatch recognition step. This protein has a weak ATPase activity. The sequence is that of DNA mismatch repair protein MutS from Oceanobacillus iheyensis (strain DSM 14371 / CIP 107618 / JCM 11309 / KCTC 3954 / HTE831).